Here is a 121-residue protein sequence, read N- to C-terminus: Large ribosomal subunit protein bL21 (121 aa).

Belongs to the bacterial ribosomal protein bL21 family. As to quaternary structure, part of the 50S ribosomal subunit. Contacts protein L20.

Functionally, this protein binds to 23S rRNA in the presence of protein L20. The protein is Large ribosomal subunit protein bL21 of Synechococcus sp. (strain CC9605).